A 281-amino-acid chain; its full sequence is tRNA uridine(34) hydroxylase (281 aa).

One can recognise a Rhodanese domain in the interval 125–222 (AREDVKTIDT…YFLKTKNKDG (98 aa)). Catalysis depends on Cys-182, which acts as the Cysteine persulfide intermediate.

It belongs to the TrhO family.

It catalyses the reaction uridine(34) in tRNA + AH2 + O2 = 5-hydroxyuridine(34) in tRNA + A + H2O. Functionally, catalyzes oxygen-dependent 5-hydroxyuridine (ho5U) modification at position 34 in tRNAs. This Neorickettsia sennetsu (strain ATCC VR-367 / Miyayama) (Ehrlichia sennetsu) protein is tRNA uridine(34) hydroxylase.